The primary structure comprises 72 residues: MAKEDRIEMQGEVLENLPNATFRVKLENGHVVLGYISGKMRMHYIRILPGDKVTVEMTPYDLSRARIIFRAK.

One can recognise an S1-like domain in the interval 1–72 (MAKEDRIEMQ…SRARIIFRAK (72 aa)).

Belongs to the IF-1 family. In terms of assembly, component of the 30S ribosomal translation pre-initiation complex which assembles on the 30S ribosome in the order IF-2 and IF-3, IF-1 and N-formylmethionyl-tRNA(fMet); mRNA recruitment can occur at any time during PIC assembly.

The protein resides in the cytoplasm. One of the essential components for the initiation of protein synthesis. Stabilizes the binding of IF-2 and IF-3 on the 30S subunit to which N-formylmethionyl-tRNA(fMet) subsequently binds. Helps modulate mRNA selection, yielding the 30S pre-initiation complex (PIC). Upon addition of the 50S ribosomal subunit IF-1, IF-2 and IF-3 are released leaving the mature 70S translation initiation complex. This chain is Translation initiation factor IF-1 1, found in Methylobacillus flagellatus (strain ATCC 51484 / DSM 6875 / VKM B-1610 / KT).